A 207-amino-acid chain; its full sequence is Urease accessory protein UreG (207 aa).

A GTP-binding site is contributed by 14-21; that stretch reads GPVGSGKT.

This sequence belongs to the SIMIBI class G3E GTPase family. UreG subfamily. Homodimer. UreD, UreF and UreG form a complex that acts as a GTP-hydrolysis-dependent molecular chaperone, activating the urease apoprotein by helping to assemble the nickel containing metallocenter of UreC. The UreE protein probably delivers the nickel.

It is found in the cytoplasm. Facilitates the functional incorporation of the urease nickel metallocenter. This process requires GTP hydrolysis, probably effectuated by UreG. This is Urease accessory protein UreG from Tolumonas auensis (strain DSM 9187 / NBRC 110442 / TA 4).